The primary structure comprises 362 residues: Chorismate synthase (362 aa).

Arginine 47 lines the NADP(+) pocket. Residues 124-126 (RSS), glycine 286, 301-305 (KPTAT), and arginine 327 each bind FMN.

This sequence belongs to the chorismate synthase family. As to quaternary structure, homotetramer. The cofactor is FMNH2.

It carries out the reaction 5-O-(1-carboxyvinyl)-3-phosphoshikimate = chorismate + phosphate. It participates in metabolic intermediate biosynthesis; chorismate biosynthesis; chorismate from D-erythrose 4-phosphate and phosphoenolpyruvate: step 7/7. In terms of biological role, catalyzes the anti-1,4-elimination of the C-3 phosphate and the C-6 proR hydrogen from 5-enolpyruvylshikimate-3-phosphate (EPSP) to yield chorismate, which is the branch point compound that serves as the starting substrate for the three terminal pathways of aromatic amino acid biosynthesis. This reaction introduces a second double bond into the aromatic ring system. The protein is Chorismate synthase of Nostoc punctiforme (strain ATCC 29133 / PCC 73102).